Reading from the N-terminus, the 485-residue chain is Glutamyl-tRNA(Gln) amidotransferase subunit A (485 aa).

Residues lysine 79 and serine 154 each act as charge relay system in the active site. The active-site Acyl-ester intermediate is serine 178.

Belongs to the amidase family. GatA subfamily. Heterotrimer of A, B and C subunits.

The enzyme catalyses L-glutamyl-tRNA(Gln) + L-glutamine + ATP + H2O = L-glutaminyl-tRNA(Gln) + L-glutamate + ADP + phosphate + H(+). Allows the formation of correctly charged Gln-tRNA(Gln) through the transamidation of misacylated Glu-tRNA(Gln) in organisms which lack glutaminyl-tRNA synthetase. The reaction takes place in the presence of glutamine and ATP through an activated gamma-phospho-Glu-tRNA(Gln). In Bacillus licheniformis (strain ATCC 14580 / DSM 13 / JCM 2505 / CCUG 7422 / NBRC 12200 / NCIMB 9375 / NCTC 10341 / NRRL NRS-1264 / Gibson 46), this protein is Glutamyl-tRNA(Gln) amidotransferase subunit A.